Reading from the N-terminus, the 312-residue chain is Malate dehydrogenase (312 aa).

Residues 7–13 (GAAGGIG) and D34 contribute to the NAD(+) site. The substrate site is built by R81 and R87. NAD(+)-binding positions include N94 and 117–119 (ITN). 2 residues coordinate substrate: N119 and R153. Catalysis depends on H177, which acts as the Proton acceptor. M227 is an NAD(+) binding site.

It belongs to the LDH/MDH superfamily. MDH type 1 family. Homodimer.

The catalysed reaction is (S)-malate + NAD(+) = oxaloacetate + NADH + H(+). Catalyzes the reversible oxidation of malate to oxaloacetate. This Escherichia coli O17:K52:H18 (strain UMN026 / ExPEC) protein is Malate dehydrogenase.